The chain runs to 456 residues: Crinkler effector protein 2 (456 aa).

Residues 1 to 17 (MVKLVCAIVGVAGSAFP) form the signal peptide. The interval 18-54 (VDTDASQLVGDLKKAIKAENAMTFTGDAKDLQLFLAK) is LQLFLAK domain. The segment at 55–136 (QPVDDESGKE…NMELPSSEQI (82 aa)) is DWL domain. An HVLVXXP motif motif is present at residues 137–143 (HVLVVVP). Residue asparagine 338 is glycosylated (N-linked (GlcNAc...) asparagine).

It belongs to the Crinkler effector family.

It is found in the secreted. Its subcellular location is the host nucleus. Functionally, secreted effector that effector that induces cell death when expressed in host plants. Induces the expression of defense response genes in tomato. This chain is Crinkler effector protein 2, found in Phytophthora infestans (Potato late blight agent).